The sequence spans 618 residues: Grainyhead-like protein 1 homolog (618 aa).

The transcription activation stretch occupies residues 1–91; sequence MTQEYDNKRP…EVEHPEPDHS (91 aa). Residues 74-92 show a composition bias toward basic and acidic residues; it reads RRSSTAKPEVEHPEPDHSK. The segment at 74–94 is disordered; it reads RRSSTAKPEVEHPEPDHSKRN. Threonine 208 carries the post-translational modification Phosphothreonine. The Grh/CP2 DB domain maps to 248–474; that stretch reads SGNNFEYTLE…DLDTQPVLFI (227 aa). Interaction with DNA regions lie at residues 380 to 389 and 427 to 430; these read TDFSSQKGVK and RKIR.

Belongs to the grh/CP2 family. Grainyhead subfamily. In terms of assembly, binds DNA as homodimer. Homodimer, also forms heterodimers with GRHL2 or GRHL3. Methylation at Arg-9 and Lys-116 may be involved in regulating transcriptional activation.

Its subcellular location is the nucleus. In terms of biological role, transcription factor involved in epithelial development. Binds directly to the consensus DNA sequence 5'-AACCGGTT-3'. Important regulator of DSG1 in the context of hair anchorage and epidermal differentiation, participates in the maintenance of the skin barrier. There is no genetic interaction with GRHL3, nor functional cooperativity due to diverse target gene selectivity during epithelia development. May play a role in regulating glucose homeostasis and insulin signaling. The polypeptide is Grainyhead-like protein 1 homolog (GRHL1) (Pongo abelii (Sumatran orangutan)).